Reading from the N-terminus, the 701-residue chain is Elongation factor G (701 aa).

A tr-type G domain is found at 8-290; it reads SLYRNIGISA…AVVELLPAPT (283 aa). GTP-binding positions include 17 to 24, 88 to 92, and 142 to 145; these read AHIDAGKT, DTPGH, and NKMD.

The protein belongs to the TRAFAC class translation factor GTPase superfamily. Classic translation factor GTPase family. EF-G/EF-2 subfamily.

It localises to the cytoplasm. Functionally, catalyzes the GTP-dependent ribosomal translocation step during translation elongation. During this step, the ribosome changes from the pre-translocational (PRE) to the post-translocational (POST) state as the newly formed A-site-bound peptidyl-tRNA and P-site-bound deacylated tRNA move to the P and E sites, respectively. Catalyzes the coordinated movement of the two tRNA molecules, the mRNA and conformational changes in the ribosome. This is Elongation factor G from Neisseria gonorrhoeae (strain ATCC 700825 / FA 1090).